The primary structure comprises 313 residues: Pseudouridine kinase (313 aa).

The protein belongs to the carbohydrate kinase PfkB family.

The catalysed reaction is pseudouridine + ATP = psi-UMP + ADP + H(+). Functionally, catalyzes the phosphorylation of pseudouridine to pseudouridine 5'-phosphate (PsiMP). This is Pseudouridine kinase (psuK) from Escherichia coli (strain K12).